A 202-amino-acid polypeptide reads, in one-letter code: Superoxide dismutase [Mn/Fe] (202 aa).

His-26, His-80, Asp-163, and His-167 together coordinate Fe(3+). The Mn(2+) site is built by His-26, His-80, Asp-163, and His-167.

It belongs to the iron/manganese superoxide dismutase family. Homodimer. Mn(2+) serves as cofactor. It depends on Fe(3+) as a cofactor.

The catalysed reaction is 2 superoxide + 2 H(+) = H2O2 + O2. Destroys superoxide anion radicals which are normally produced within the cells and which are toxic to biological systems. Catalyzes the dismutation of superoxide anion radicals into O2 and H2O2 by successive reduction and oxidation of the transition metal ion at the active site. In Methylomonas sp. (strain J), this protein is Superoxide dismutase [Mn/Fe] (sodB).